Here is a 216-residue protein sequence, read N- to C-terminus: Cyclo(L-leucyl-L-leucyl) synthase (216 aa).

Residue serine 14 is the Nucleophile of the active site. Residues asparagine 17, 155-159 (YIFDE), and tyrosine 179 contribute to the substrate site.

Belongs to the CDPS family.

The enzyme catalyses 2 L-leucyl-tRNA(Leu) = cyclo(L-leucyl-L-leucyl) + 2 tRNA(Leu) + 2 H(+). Its function is as follows. It uses activated amino acids in the form of aminoacyl-tRNAs (aa-tRNAs) as substrates to catalyze the ATP-independent formation of cyclodipeptides which are intermediates in diketopiperazine (DKP) biosynthetic pathways. Catalyzes the formation of cyclo(L-Leu-L-Leu) (cLL) from L-leucyl-tRNA(Leu). Can incorporate various nonpolar residues, such as L-leucine and L-methionine, into cyclodipeptides. The protein is Cyclo(L-leucyl-L-leucyl) synthase of Corynebacterium jeikeium (strain K411).